The sequence spans 229 residues: Heptahelical transmembrane protein ADIPOR2 (229 aa).

Residues 1 to 4 (MQGA) are Cytoplasmic-facing. A helical transmembrane segment spans residues 5 to 25 (ASHDAAAAAAAAAVLGGGHGV). Topologically, residues 26–30 (PRWPR) are extracellular. Residues 31-51 (MVFLVGAMTCLAISATAHLLA) traverse the membrane as a helical segment. Residues 52 to 66 (CHSRRASVVFWQLDY) lie on the Cytoplasmic side of the membrane. The helical transmembrane segment at 67–87 (AGISAMIVASFVPPVYYAFLC) threads the bilayer. Over 88 to 92 (HRPAR) the chain is Extracellular. The helical transmembrane segment at 93–113 (VAYLSAISALGALVVGALLSP) threads the bilayer. The Cytoplasmic portion of the chain corresponds to 114–124 (PCSSPRFRRLR). The helical transmembrane segment at 125–145 (AALFLAMGLSGVVPALHALWL) threads the bilayer. Residues 146–153 (NWGHAACY) lie on the Extracellular side of the membrane. A helical membrane pass occupies residues 154 to 174 (LALSLEVAMGLAYAAGAWFYV). At 175–194 (SRVPEKWRPGVFDVVGHSHQ) the chain is on the cytoplasmic side. The chain crosses the membrane as a helical span at residues 195 to 215 (IFHVLVLVGAVTHYVAVDVLL). At 216–229 (NWRETVAAACSATS) the chain is on the extracellular side.

The protein belongs to the ADIPOR family.

The protein resides in the membrane. In terms of biological role, may play a role in abiotic stress response. The sequence is that of Heptahelical transmembrane protein ADIPOR2 (ADIPOR2) from Oryza sativa subsp. japonica (Rice).